A 356-amino-acid polypeptide reads, in one-letter code: Phospho-N-acetylmuramoyl-pentapeptide-transferase (356 aa).

10 consecutive transmembrane segments (helical) span residues 3 to 23, 51 to 71, 80 to 100, 114 to 134, 152 to 172, 185 to 205, 227 to 247, 254 to 274, 279 to 299, and 333 to 353; these read QILF…PLLI, TMGG…AKVI, GLLV…DDYI, AKMA…LQFP, FGWS…ILAM, LATG…LWQF, PLDL…FLWW, IFMG…LAIL, FLLA…VIQV, and FWII…AGWA.

The protein belongs to the glycosyltransferase 4 family. MraY subfamily. Mg(2+) is required as a cofactor.

It is found in the cell membrane. It carries out the reaction UDP-N-acetyl-alpha-D-muramoyl-L-alanyl-gamma-D-glutamyl-meso-2,6-diaminopimeloyl-D-alanyl-D-alanine + di-trans,octa-cis-undecaprenyl phosphate = di-trans,octa-cis-undecaprenyl diphospho-N-acetyl-alpha-D-muramoyl-L-alanyl-D-glutamyl-meso-2,6-diaminopimeloyl-D-alanyl-D-alanine + UMP. It participates in cell wall biogenesis; peptidoglycan biosynthesis. Catalyzes the initial step of the lipid cycle reactions in the biosynthesis of the cell wall peptidoglycan: transfers peptidoglycan precursor phospho-MurNAc-pentapeptide from UDP-MurNAc-pentapeptide onto the lipid carrier undecaprenyl phosphate, yielding undecaprenyl-pyrophosphoryl-MurNAc-pentapeptide, known as lipid I. This is Phospho-N-acetylmuramoyl-pentapeptide-transferase from Streptomyces griseus subsp. griseus (strain JCM 4626 / CBS 651.72 / NBRC 13350 / KCC S-0626 / ISP 5235).